A 690-amino-acid chain; its full sequence is Protein-glutamine gamma-glutamyltransferase 2 (690 aa).

Ala-2 bears the N-acetylalanine mark. 2 disulfides stabilise this stretch: Cys-230/Cys-370 and Cys-370/Cys-371. Residues Cys-277, His-335, and Asp-358 contribute to the active site. Positions 398, 400, 436, 446, and 451 each coordinate Ca(2+). Lys-467 is subject to N6-acetyllysine. 479-486 (RIRVGQNM) is a binding site for GTP. A Ca(2+)-binding site is contributed by Glu-542. GTP is bound at residue 583–586 (RDIY). Residue Gln-636 forms an Isoglutamyl lysine isopeptide (Gln-Lys) (interchain with K-?) linkage.

Belongs to the transglutaminase superfamily. Transglutaminase family. As to quaternary structure, monomer. Interacts with phospholipase C; promoting alpha-1 adrenergic receptor signaling. Interacts with PLCD1. It depends on Ca(2+) as a cofactor. Post-translationally, disulfide bond formation inactivates the calcium-dependent acyltransferase activity. Cys-370 can form disulfide bonds with both Cys-230 and Cys-371: formation of a disulfide bond between Cys-230 and Cys-370 facilitates formation of the disulfide between Cys-370 and Cys-371, which promotes inactivation of the acyltransferase activity. May also form interchain disulfids between Cys-230 and Cys-370. Ca(2+) protects against disulfide bond formation and inactivation. Auto-transglutaminated: Forms covalent cross-links mediated by transglutaminase between Gln-636 and the epsilon-amino group of a lysine residue of itself or HMGB1, forming homopolymers and heteropolymers, respectively. In terms of processing, S-nitrosylated, leading to inactivation of the acyltransferase activity.

It localises to the cytoplasm. It is found in the cytosol. The protein resides in the nucleus. The protein localises to the chromosome. Its subcellular location is the secreted. It localises to the extracellular space. It is found in the extracellular matrix. The protein resides in the cell membrane. The protein localises to the mitochondrion. It catalyses the reaction L-glutaminyl-[protein] + L-lysyl-[protein] = [protein]-L-lysyl-N(6)-5-L-glutamyl-[protein] + NH4(+). The catalysed reaction is L-glutaminyl-[protein] + serotonin = 5-serotonyl-L-glutamyl-[protein] + NH4(+). It carries out the reaction L-glutaminyl-[protein] + dopamine = 5-dopaminyl-L-glutamyl-[protein] + NH4(+). The enzyme catalyses L-glutaminyl-[protein] + histamine = 5-histaminyl-L-glutamyl-[protein] + NH4(+). It catalyses the reaction L-glutaminyl-[protein] + (R)-noradrenaline = 5-(R)-noradrenalinyl-L-glutamyl-[protein] + NH4(+). The catalysed reaction is L-glutaminyl-[protein] + H2O = L-glutamyl-[protein] + NH4(+). Its activity is regulated as follows. Acyltransferase activity is regulated by the binding of GTP and Ca(2+): inactivated by GTP, which stabilizes its closed structure, thereby obstructing the accessibility of substrates to the active sites. In contrast, Ca(2+) acts as a cofactor by inducing conformational change to the active open form. In absence of Ca(2+), Mg(2+) may bind Ca(2+)-binding sites, promoting GTP-binding and subsequent inhibition of the acyltransferase activity. Extracellularly reduced and activated by CLIC3. Functionally, calcium-dependent acyltransferase that catalyzes the formation of covalent bonds between peptide-bound glutamine and various primary amines, such as gamma-amino group of peptide-bound lysine, or mono- and polyamines, thereby producing cross-linked or aminated proteins, respectively. Involved in many biological processes, such as bone development, angiogenesis, wound healing, cellular differentiation, chromatin modification and apoptosis. Acts as a protein-glutamine gamma-glutamyltransferase by mediating the cross-linking of proteins, such as ACO2, HSPB6, FN1, HMGB1, RAP1GDS1, SLC25A4/ANT1, SPP1 and WDR54. Under physiological conditions, the protein cross-linking activity is inhibited by GTP; inhibition is relieved by Ca(2+) in response to various stresses. When secreted, catalyzes cross-linking of proteins of the extracellular matrix, such as FN1 and SPP1 resulting in the formation of scaffolds. Plays a key role during apoptosis, both by (1) promoting the cross-linking of cytoskeletal proteins resulting in condensation of the cytoplasm, and by (2) mediating cross-linking proteins of the extracellular matrix, resulting in the irreversible formation of scaffolds that stabilize the integrity of the dying cells before their clearance by phagocytosis, thereby preventing the leakage of harmful intracellular components. In addition to protein cross-linking, can use different monoamine substrates to catalyze a vast array of protein post-translational modifications: mediates aminylation of serotonin, dopamine, noradrenaline or histamine into glutamine residues of target proteins to generate protein serotonylation, dopaminylation, noradrenalinylation or histaminylation, respectively. Mediates protein serotonylation of small GTPases during activation and aggregation of platelets, leading to constitutive activation of these GTPases. Plays a key role in chromatin organization by mediating serotonylation and dopaminylation of histone H3. Catalyzes serotonylation of 'Gln-5' of histone H3 (H3Q5ser) during serotonergic neuron differentiation, thereby facilitating transcription. Acts as a mediator of neurotransmission-independent role of nuclear dopamine in ventral tegmental area (VTA) neurons: catalyzes dopaminylation of 'Gln-5' of histone H3 (H3Q5dop), thereby regulating relapse-related transcriptional plasticity in the reward system. Regulates vein remodeling by mediating serotonylation and subsequent inactivation of ATP2A2/SERCA2. Also acts as a protein deamidase by mediating the side chain deamidation of specific glutamine residues of proteins to glutamate. Catalyzes specific deamidation of protein gliadin, a component of wheat gluten in the diet. May also act as an isopeptidase cleaving the previously formed cross-links. Also able to participate in signaling pathways independently of its acyltransferase activity: acts as a signal transducer in alpha-1 adrenergic receptor-mediated stimulation of phospholipase C-delta (PLCD) activity and is required for coupling alpha-1 adrenergic agonists to the stimulation of phosphoinositide lipid metabolism. This is Protein-glutamine gamma-glutamyltransferase 2 from Cavia cutleri (Guinea pig).